The sequence spans 840 residues: Probable inorganic carbon transporter subunit DabA 2 (840 aa).

Zn(2+) is bound by residues Cys356, Asp358, His540, and Cys555.

Belongs to the inorganic carbon transporter (TC 9.A.2) DabA family. As to quaternary structure, forms a complex with DabB. Requires Zn(2+) as cofactor.

It localises to the cell inner membrane. In terms of biological role, part of an energy-coupled inorganic carbon pump. The polypeptide is Probable inorganic carbon transporter subunit DabA 2 (Bradyrhizobium sp. (strain ORS 278)).